Consider the following 939-residue polypeptide: Protein translocase subunit SecA (939 aa).

ATP is bound by residues Gln-85, 103–107 (GEGKT), and Asp-504. The interval 850–939 (PVQDGAERPS…KGGGGRRRKK (90 aa)) is disordered. A compositionally biased stretch (basic and acidic residues) spans 854 to 864 (GAERPSLEKEG). Residues 924–939 (ERRKAQKGGGGRRRKK) are compositionally biased toward basic residues.

This sequence belongs to the SecA family. In terms of assembly, monomer and homodimer. Part of the essential Sec protein translocation apparatus which comprises SecA, SecYEG and auxiliary proteins SecDF. Other proteins may also be involved.

The protein localises to the cell membrane. It localises to the cytoplasm. The catalysed reaction is ATP + H2O + cellular proteinSide 1 = ADP + phosphate + cellular proteinSide 2.. Functionally, part of the Sec protein translocase complex. Interacts with the SecYEG preprotein conducting channel. Has a central role in coupling the hydrolysis of ATP to the transfer of proteins into and across the cell membrane, serving as an ATP-driven molecular motor driving the stepwise translocation of polypeptide chains across the membrane. This chain is Protein translocase subunit SecA, found in Streptomyces griseus subsp. griseus (strain JCM 4626 / CBS 651.72 / NBRC 13350 / KCC S-0626 / ISP 5235).